Here is a 232-residue protein sequence, read N- to C-terminus: Zinc import ATP-binding protein ZnuC (232 aa).

The region spanning 5–220 (VNLKNIFVFY…PSFIEMFGCY (216 aa)) is the ABC transporter domain. 37–44 (GPNGSGKS) contacts ATP.

The protein belongs to the ABC transporter superfamily. Zinc importer (TC 3.A.1.15.5) family. As to quaternary structure, the complex is composed of two ATP-binding proteins (ZnuC), two transmembrane proteins (ZnuB) and a solute-binding protein (ZnuA).

The protein localises to the cell membrane. The enzyme catalyses Zn(2+)(out) + ATP(in) + H2O(in) = Zn(2+)(in) + ADP(in) + phosphate(in) + H(+)(in). Part of the ABC transporter complex ZnuABC involved in zinc import. Responsible for energy coupling to the transport system. This Wigglesworthia glossinidia brevipalpis protein is Zinc import ATP-binding protein ZnuC.